The primary structure comprises 599 residues: Elongation factor 4 (599 aa).

One can recognise a tr-type G domain in the interval 5–187 (SHIRNFSIIA…VLIKSVPAPV (183 aa)). GTP contacts are provided by residues 17-22 (DHGKST) and 134-137 (NKID).

The protein belongs to the TRAFAC class translation factor GTPase superfamily. Classic translation factor GTPase family. LepA subfamily.

The protein localises to the cell inner membrane. The enzyme catalyses GTP + H2O = GDP + phosphate + H(+). Required for accurate and efficient protein synthesis under certain stress conditions. May act as a fidelity factor of the translation reaction, by catalyzing a one-codon backward translocation of tRNAs on improperly translocated ribosomes. Back-translocation proceeds from a post-translocation (POST) complex to a pre-translocation (PRE) complex, thus giving elongation factor G a second chance to translocate the tRNAs correctly. Binds to ribosomes in a GTP-dependent manner. The protein is Elongation factor 4 of Saccharophagus degradans (strain 2-40 / ATCC 43961 / DSM 17024).